Consider the following 613-residue polypeptide: Methionine--tRNA ligase (613 aa).

A 'HIGH' region motif is present at residues 15 to 25 (PYANGPRHIGH). Zn(2+) is bound by residues Cys147, Cys150, Cys160, and Cys163. Residues 351–355 (KFSSS) carry the 'KMSKS' region motif. Ser354 provides a ligand contact to ATP.

The protein belongs to the class-I aminoacyl-tRNA synthetase family. MetG type 1 subfamily. In terms of assembly, monomer. Requires Zn(2+) as cofactor.

The protein resides in the cytoplasm. It catalyses the reaction tRNA(Met) + L-methionine + ATP = L-methionyl-tRNA(Met) + AMP + diphosphate. Its function is as follows. Is required not only for elongation of protein synthesis but also for the initiation of all mRNA translation through initiator tRNA(fMet) aminoacylation. This Corynebacterium efficiens (strain DSM 44549 / YS-314 / AJ 12310 / JCM 11189 / NBRC 100395) protein is Methionine--tRNA ligase.